The chain runs to 393 residues: Formate-dependent phosphoribosylglycinamide formyltransferase (393 aa).

Residues 20 to 21 (EL) and Glu80 each bind N(1)-(5-phospho-beta-D-ribosyl)glycinamide. Residues Arg112, Lys153, 158–163 (SSGKGQ), 193–196 (EAFI), and Glu201 each bind ATP. An ATP-grasp domain is found at 117-306 (RLAAEDLNLP…EFELHVRAVL (190 aa)). Residues Glu265 and Glu277 each coordinate Mg(2+). N(1)-(5-phospho-beta-D-ribosyl)glycinamide-binding positions include Asp284, Lys354, and 361–362 (RR).

Belongs to the PurK/PurT family. In terms of assembly, homodimer.

The catalysed reaction is N(1)-(5-phospho-beta-D-ribosyl)glycinamide + formate + ATP = N(2)-formyl-N(1)-(5-phospho-beta-D-ribosyl)glycinamide + ADP + phosphate + H(+). Its pathway is purine metabolism; IMP biosynthesis via de novo pathway; N(2)-formyl-N(1)-(5-phospho-D-ribosyl)glycinamide from N(1)-(5-phospho-D-ribosyl)glycinamide (formate route): step 1/1. Its function is as follows. Involved in the de novo purine biosynthesis. Catalyzes the transfer of formate to 5-phospho-ribosyl-glycinamide (GAR), producing 5-phospho-ribosyl-N-formylglycinamide (FGAR). Formate is provided by PurU via hydrolysis of 10-formyl-tetrahydrofolate. This is Formate-dependent phosphoribosylglycinamide formyltransferase from Syntrophotalea carbinolica (strain DSM 2380 / NBRC 103641 / GraBd1) (Pelobacter carbinolicus).